A 624-amino-acid chain; its full sequence is Bifunctional 3'-phosphoadenosine 5'-phosphosulfate synthase 1 (624 aa).

Residue methionine 1 is modified to N-acetylmethionine. The interval 1–225 (MEIPGSLCKK…VVELLQERDI (225 aa)) is adenylyl-sulfate kinase. Lysine 12 bears the N6-acetyllysine mark. 62–67 (GAGKTT) contacts ATP. Residues 89-92 (DNIR), phenylalanine 101, 106-109 (REEN), 132-133 (IS), lysine 171, and 184-185 (GF) contribute to the adenosine 5'-phosphosulfate site. ATP contacts are provided by residues cysteine 207, cysteine 212, 419 to 422 (QLRN), 521 to 525 (GRDPA), and alanine 563. Residues 234-624 (VKELYVPENK…VEYYKSLEKA (391 aa)) form a sulfate adenylyltransferase region.

In the N-terminal section; belongs to the APS kinase family. This sequence in the C-terminal section; belongs to the sulfate adenylyltransferase family. Homodimer. In terms of tissue distribution, expressed in the neonatal brain and in cartilage.

The enzyme catalyses sulfate + ATP + H(+) = adenosine 5'-phosphosulfate + diphosphate. It carries out the reaction adenosine 5'-phosphosulfate + ATP = 3'-phosphoadenylyl sulfate + ADP + H(+). It functions in the pathway sulfur metabolism; sulfate assimilation. Bifunctional enzyme with both ATP sulfurylase and APS kinase activity, which mediates two steps in the sulfate activation pathway. The first step is the transfer of a sulfate group to ATP to yield adenosine 5'-phosphosulfate (APS), and the second step is the transfer of a phosphate group from ATP to APS yielding 3'-phosphoadenylylsulfate (PAPS: activated sulfate donor used by sulfotransferase). In mammals, PAPS is the sole source of sulfate; APS appears to be only an intermediate in the sulfate-activation pathway. Required for normal biosynthesis of sulfated L-selectin ligands in endothelial cells. This Mus musculus (Mouse) protein is Bifunctional 3'-phosphoadenosine 5'-phosphosulfate synthase 1 (Papss1).